Consider the following 260-residue polypeptide: Taurine import ATP-binding protein TauB (260 aa).

The 230-residue stretch at 6–235 (AQQVSVVYAS…RYAHGEPMRS (230 aa)) folds into the ABC transporter domain. An ATP-binding site is contributed by 40 to 47 (GASGCGKS).

This sequence belongs to the ABC transporter superfamily. Taurine importer (TC 3.A.1.17.1) family. The complex is composed of two ATP-binding proteins (TauB), two transmembrane proteins (TauC) and a solute-binding protein (TauA).

The protein localises to the cell inner membrane. It catalyses the reaction taurine(out) + ATP + H2O = taurine(in) + ADP + phosphate + H(+). Part of the ABC transporter complex TauABC involved in taurine import. Responsible for energy coupling to the transport system. The sequence is that of Taurine import ATP-binding protein TauB from Burkholderia pseudomallei (strain 1710b).